The primary structure comprises 64 residues: Large ribosomal subunit protein bL33c (64 aa).

This sequence belongs to the bacterial ribosomal protein bL33 family.

The protein resides in the plastid. It is found in the chloroplast. The polypeptide is Large ribosomal subunit protein bL33c (Thalassiosira pseudonana (Marine diatom)).